Reading from the N-terminus, the 177-residue chain is Large ribosomal subunit protein uL6 (177 aa).

It belongs to the universal ribosomal protein uL6 family. As to quaternary structure, part of the 50S ribosomal subunit.

Its function is as follows. This protein binds to the 23S rRNA, and is important in its secondary structure. It is located near the subunit interface in the base of the L7/L12 stalk, and near the tRNA binding site of the peptidyltransferase center. The protein is Large ribosomal subunit protein uL6 of Verminephrobacter eiseniae (strain EF01-2).